A 460-amino-acid polypeptide reads, in one-letter code: Argininosuccinate lyase (460 aa).

The protein belongs to the lyase 1 family. Argininosuccinate lyase subfamily.

The protein resides in the cytoplasm. It carries out the reaction 2-(N(omega)-L-arginino)succinate = fumarate + L-arginine. Its pathway is amino-acid biosynthesis; L-arginine biosynthesis; L-arginine from L-ornithine and carbamoyl phosphate: step 3/3. The chain is Argininosuccinate lyase from Staphylococcus haemolyticus (strain JCSC1435).